A 274-amino-acid polypeptide reads, in one-letter code: NH(3)-dependent NAD(+) synthetase (274 aa).

An ATP-binding site is contributed by 46–53 (GISGGQDS). Asp-52 contributes to the Mg(2+) binding site. Arg-140 contacts deamido-NAD(+). Thr-160 lines the ATP pocket. Glu-165 is a binding site for Mg(2+). Residues Lys-173 and Asp-180 each contribute to the deamido-NAD(+) site. Positions 189 and 211 each coordinate ATP. Deamido-NAD(+) is bound at residue 260–261 (HK).

It belongs to the NAD synthetase family. Homodimer.

The enzyme catalyses deamido-NAD(+) + NH4(+) + ATP = AMP + diphosphate + NAD(+) + H(+). The protein operates within cofactor biosynthesis; NAD(+) biosynthesis; NAD(+) from deamido-NAD(+) (ammonia route): step 1/1. Its function is as follows. Catalyzes the ATP-dependent amidation of deamido-NAD to form NAD. Uses ammonia as a nitrogen source. The protein is NH(3)-dependent NAD(+) synthetase of Lysinibacillus sphaericus (strain C3-41).